The primary structure comprises 162 residues: Cytochrome c-type biogenesis protein CcmE (162 aa).

Topologically, residues Met1–Arg8 are cytoplasmic. The helical; Signal-anchor for type II membrane protein transmembrane segment at Leu9–Ala29 threads the bilayer. Residues Leu30–Lys162 are Periplasmic-facing. His131 and Tyr135 together coordinate heme. The segment at Glu139–Lys162 is disordered. Residues Tyr153–Lys162 are compositionally biased toward polar residues.

This sequence belongs to the CcmE/CycJ family.

The protein resides in the cell inner membrane. Functionally, heme chaperone required for the biogenesis of c-type cytochromes. Transiently binds heme delivered by CcmC and transfers the heme to apo-cytochromes in a process facilitated by CcmF and CcmH. This is Cytochrome c-type biogenesis protein CcmE from Shewanella putrefaciens (strain CN-32 / ATCC BAA-453).